A 275-amino-acid polypeptide reads, in one-letter code: 2-dehydro-3-deoxyphosphooctonate aldolase (275 aa).

It belongs to the KdsA family.

It localises to the cytoplasm. It carries out the reaction D-arabinose 5-phosphate + phosphoenolpyruvate + H2O = 3-deoxy-alpha-D-manno-2-octulosonate-8-phosphate + phosphate. It functions in the pathway carbohydrate biosynthesis; 3-deoxy-D-manno-octulosonate biosynthesis; 3-deoxy-D-manno-octulosonate from D-ribulose 5-phosphate: step 2/3. It participates in bacterial outer membrane biogenesis; lipopolysaccharide biosynthesis. The chain is 2-dehydro-3-deoxyphosphooctonate aldolase from Protochlamydia amoebophila (strain UWE25).